A 519-amino-acid polypeptide reads, in one-letter code: Glucoamylase GLU1 (519 aa).

The N-terminal stretch at 1 to 27 is a signal peptide; the sequence is MKFGVLFSVFAAIVSALPLQEGPLNKR. N-linked (GlcNAc...) asparagine glycans are attached at residues Asn115 and Asn127. Trp166 is a substrate binding site. The N-linked (GlcNAc...) asparagine glycan is linked to Asn205. Asp234 functions as the Proton acceptor in the catalytic mechanism. The active-site Proton donor is the Glu237.

It belongs to the glycosyl hydrolase 15 family.

It carries out the reaction Hydrolysis of terminal (1-&gt;4)-linked alpha-D-glucose residues successively from non-reducing ends of the chains with release of beta-D-glucose.. The chain is Glucoamylase GLU1 (GLU1) from Saccharomycopsis fibuligera (Yeast).